The following is a 216-amino-acid chain: Cytochrome c oxidase assembly protein CtaG (216 aa).

Low complexity predominate over residues 1–23 (MTDAPQHPQQPATGTPATPKAAP). The tract at residues 1–24 (MTDAPQHPQQPATGTPATPKAAPR) is disordered. The Cytoplasmic segment spans residues 1 to 26 (MTDAPQHPQQPATGTPATPKAAPRVG). Residues 27–49 (RDVRIGATCGLLVALMVGAAYAA) traverse the membrane as a helical; Signal-anchor for type II membrane protein segment. Over 50–216 (VPFYNWFCRA…SEPDRPGGSI (167 aa)) the chain is Periplasmic.

It belongs to the COX11/CtaG family.

The protein localises to the cell inner membrane. Exerts its effect at some terminal stage of cytochrome c oxidase synthesis, probably by being involved in the insertion of the copper B into subunit I. The sequence is that of Cytochrome c oxidase assembly protein CtaG from Nitrobacter hamburgensis (strain DSM 10229 / NCIMB 13809 / X14).